Here is a 33-residue protein sequence, read N- to C-terminus: MNLEVIAQLIALALIVGSGPLVIALLAARKGNL.

The helical transmembrane segment at 5 to 25 (VIAQLIALALIVGSGPLVIAL) threads the bilayer.

This sequence belongs to the Psb30/Ycf12 family. In terms of assembly, PSII is composed of 1 copy each of membrane proteins PsbA, PsbB, PsbC, PsbD, PsbE, PsbF, PsbH, PsbI, PsbJ, PsbK, PsbL, PsbM, PsbT, PsbX, PsbY, PsbZ, Psb30/Ycf12, peripheral proteins of the oxygen-evolving complex and a large number of cofactors. It forms dimeric complexes.

Its subcellular location is the plastid. The protein resides in the chloroplast thylakoid membrane. Functionally, a core subunit of photosystem II (PSII), probably helps stabilize the reaction center. The chain is Photosystem II reaction center protein Psb30 from Physcomitrium patens (Spreading-leaved earth moss).